Reading from the N-terminus, the 302-residue chain is Nucleotide-binding protein Rsph17029_0317 (302 aa).

An ATP-binding site is contributed by 15-22 (GPSGAGRT). 62-65 (DVRN) serves as a coordination point for GTP.

The protein belongs to the RapZ-like family.

In terms of biological role, displays ATPase and GTPase activities. This chain is Nucleotide-binding protein Rsph17029_0317, found in Cereibacter sphaeroides (strain ATCC 17029 / ATH 2.4.9) (Rhodobacter sphaeroides).